The chain runs to 193 residues: Acyl carrier protein phosphodiesterase (193 aa).

Belongs to the AcpH family.

It carries out the reaction holo-[ACP] + H2O = apo-[ACP] + (R)-4'-phosphopantetheine + H(+). In terms of biological role, converts holo-ACP to apo-ACP by hydrolytic cleavage of the phosphopantetheine prosthetic group from ACP. The protein is Acyl carrier protein phosphodiesterase of Shigella boydii serotype 18 (strain CDC 3083-94 / BS512).